The following is a 467-amino-acid chain: Glycosyl hydrolase family 109 protein (467 aa).

The segment at residues 1-31 is a signal peptide (tat-type signal); that stretch reads MKNFNRRAFLKAAGATTAGLVTSGLILPASA. NAD(+) contacts are provided by residues 66–67, D88, 137–140, 157–158, and N186; these read QR, WQWH, and EV. Substrate-binding positions include Y215, R234, 246 to 249, and Y328; that span reads YPTH. Y246 is a binding site for NAD(+).

Belongs to the Gfo/Idh/MocA family. Glycosyl hydrolase 109 subfamily. NAD(+) serves as cofactor. Post-translationally, predicted to be exported by the Tat system. The position of the signal peptide cleavage has not been experimentally proven.

Functionally, glycosidase. The protein is Glycosyl hydrolase family 109 protein of Shewanella woodyi (strain ATCC 51908 / MS32).